Here is a 348-residue protein sequence, read N- to C-terminus: N-formyl peptide receptor 2 (348 aa).

Asn1 carries an N-linked (GlcNAc...) asparagine glycan. At 1–24 the chain is on the extracellular side; it reads NFSTPLNEYEEGSYESAGYTVLRI. Residues 25 to 47 traverse the membrane as a helical segment; that stretch reads LPLVVLGVTFVLGVLGNGLVIWV. Residues 48 to 58 are Cytoplasmic-facing; the sequence is AGFRMTRTVTT. The chain crosses the membrane as a helical span at residues 59 to 80; the sequence is ICYLNLALADFSFTATLPFLIV. Over 81–97 the chain is Extracellular; that stretch reads SMAMGEKWPFGWFLCKL. Residues Cys95 and Cys173 are joined by a disulfide bond. The helical transmembrane segment at 98-118 threads the bilayer; it reads IHIVVDINLFGSVFLIGFIAL. At 119-137 the chain is on the cytoplasmic side; that stretch reads DRCICVLHPVWAQNHRTVS. The chain crosses the membrane as a helical span at residues 138 to 159; it reads LAMKVIVGPWILALVLTLPVFL. At 160–202 the chain is on the extracellular side; that stretch reads FLTTVTIPNGDTYCTFNFASWGGTPEERLKVAITLLTARGIIR. The helical transmembrane segment at 203–223 threads the bilayer; that stretch reads FVIGFSLPMSIVAICYGLIAA. Residues 224–239 lie on the Cytoplasmic side of the membrane; sequence KIHKKGMIKSSRPLRV. Residues 240–263 traverse the membrane as a helical segment; the sequence is LTAVVASFFICWFPFQLVALLGTV. Topologically, residues 264 to 283 are extracellular; the sequence is WLKEMLFYGKYKIIDILVNP. Residues 284 to 303 form a helical membrane-spanning segment; sequence TSSLAFFNCCLNPMLYVFVG. The Cytoplasmic segment spans residues 304–348; that stretch reads QDFRERLIHSLPTSLERALSEDSAPTNDTAANCASPPAETELQAM. The disordered stretch occupies residues 322–348; the sequence is LSEDSAPTNDTAANCASPPAETELQAM. Positions 326–335 are enriched in polar residues; sequence SAPTNDTAAN.

Belongs to the G-protein coupled receptor 1 family. Interacts with Amyloid-beta protein 42, product of APP; the interaction takes place at the cell surface and the complex is then rapidly internalized.

The protein resides in the cell membrane. Its function is as follows. Low affinity receptor for N-formyl-methionyl peptides, which are powerful neutrophil chemotactic factors. Binding of FMLP to the receptor causes activation of neutrophils. This response is mediated via a G-protein that activates a phosphatidylinositol-calcium second messenger system. Receptor for the chemokine-like protein FAM19A5, mediating FAM19A5-stimulated macrophage chemotaxis and the inhibitory effect on TNFSF11/RANKL-induced osteoclast differentiation. This Pan troglodytes (Chimpanzee) protein is N-formyl peptide receptor 2 (FPR2).